Consider the following 347-residue polypeptide: NADH-ubiquinone oxidoreductase chain 2 (347 aa).

9 helical membrane passes run Pro3–Ser23, His25–Met45, Tyr59–Leu79, Phe111–Leu131, Ile149–Gly169, Leu200–Met220, Leu242–Pro262, Asn274–Met294, and Leu325–Ile345.

It belongs to the complex I subunit 2 family. In terms of assembly, core subunit of respiratory chain NADH dehydrogenase (Complex I) which is composed of 45 different subunits. Interacts with TMEM242.

The protein resides in the mitochondrion inner membrane. The enzyme catalyses a ubiquinone + NADH + 5 H(+)(in) = a ubiquinol + NAD(+) + 4 H(+)(out). Functionally, core subunit of the mitochondrial membrane respiratory chain NADH dehydrogenase (Complex I) which catalyzes electron transfer from NADH through the respiratory chain, using ubiquinone as an electron acceptor. Essential for the catalytic activity and assembly of complex I. This Ailurus fulgens (Himalayan red panda) protein is NADH-ubiquinone oxidoreductase chain 2.